Consider the following 645-residue polypeptide: Iron-regulated surface determinant protein B (645 aa).

The N-terminal stretch at 1-40 (MNKQQKEFKSFYSIRKSSLGVASVAISTLLLLMSNGEAQA) is a signal peptide. Residues 12–23 (YSIRKSSLGVAS) carry the YSIRK-G/S signaling motif motif. The span at 38–53 (AQAAAEETGGTNTEAQ) shows a compositional bias: low complexity. The segment at 38–113 (AQAAAEETGG…APKETKEVKP (76 aa)) is disordered. Positions 84-113 (KEVEAPTSETKEAKEVKEVKAPKETKEVKP) are enriched in basic and acidic residues. 2 consecutive NEAT domains span residues 144–269 (SAPN…KFKT) and 341–458 (KMTD…TKAN). The heme site is built by Met362 and Tyr440. Basic and acidic residues-rich tracts occupy residues 458–476 (NTDK…KKEA) and 489–534 (VEKE…KGEV). A disordered region spans residues 458 to 619 (NTDKSNKKEQ…LPQTGEESNK (162 aa)). The span at 535 to 560 (ESSSTTPTKVVSTTQNVAKPTTASSK) shows a compositional bias: low complexity. Residues 585 to 615 (NIKNTNDGHTQSQNNKNTQENKAKSLPQTGE) show a composition bias toward polar residues. An LPXTG sorting signal motif is present at residues 610–614 (LPQTG). Thr613 is subject to Pentaglycyl murein peptidoglycan amidated threonine. A propeptide spans 614–645 (GEESNKDMTLPLMALLALSSIVAFVLPRKRKN) (removed by sortase).

Belongs to the IsdB family. Interacts with host HBA; this interaction allows heme extraction as iron source. Interacts with IsdA.

It localises to the secreted. It is found in the cell wall. Cell wall-anchored surface receptor that extracts heme from oxidized metHb to enable growth on hemoglobin as a sole iron source. Rapidly extracts heme from hemoglobin and transfers it to IsdA or IsdC, which then relays it to the membrane transporter/IsdEF for internalization. Also promotes resistance to hydrogen peroxide and killing by neutrophils. The polypeptide is Iron-regulated surface determinant protein B (isdB) (Staphylococcus aureus (strain USA300 / TCH1516)).